Consider the following 637-residue polypeptide: Threonine--tRNA ligase (637 aa).

The TGS domain occupies 1–61; sequence MLNITLPDCS…VEDSAVQIIT (61 aa). A catalytic region spans residues 242–533; sequence DHRKLGKQLD…LIENHAGSFP (292 aa). Zn(2+)-binding residues include Cys-333, His-384, and His-510.

The protein belongs to the class-II aminoacyl-tRNA synthetase family. In terms of assembly, homodimer. Zn(2+) is required as a cofactor.

It localises to the cytoplasm. It catalyses the reaction tRNA(Thr) + L-threonine + ATP = L-threonyl-tRNA(Thr) + AMP + diphosphate + H(+). Its function is as follows. Catalyzes the attachment of threonine to tRNA(Thr) in a two-step reaction: L-threonine is first activated by ATP to form Thr-AMP and then transferred to the acceptor end of tRNA(Thr). Also edits incorrectly charged L-seryl-tRNA(Thr). The polypeptide is Threonine--tRNA ligase (Neisseria gonorrhoeae (strain ATCC 700825 / FA 1090)).